A 541-amino-acid chain; its full sequence is Alpha-zingiberene synthase (541 aa).

Positions 296, 300, 437, 441, and 445 each coordinate Mg(2+). A DDXXD motif motif is present at residues 296-300 (DDIYD).

This sequence belongs to the terpene synthase family. It depends on Mg(2+) as a cofactor. Mn(2+) serves as cofactor.

The enzyme catalyses (2E,6E)-farnesyl diphosphate = alpha-zingiberene + diphosphate. It participates in secondary metabolite biosynthesis; terpenoid biosynthesis. In terms of biological role, sesquiterpene synthase that catalyzes the formation of alpha-zingiberene and other sesquiterpenes from trans,trans-farnesyl diphosphate (FPP). May have an additional monoterpene synthase activity. In Ocimum basilicum (Sweet basil), this protein is Alpha-zingiberene synthase (ZIS).